The chain runs to 206 residues: Holliday junction branch migration complex subunit RuvA (206 aa).

The tract at residues Met1–Asn64 is domain I. Residues Thr65–Pro143 are domain II. Residues Ala144–Ser157 are flexible linker. The domain III stretch occupies residues Ser158–Ile206.

The protein belongs to the RuvA family. Homotetramer. Forms an RuvA(8)-RuvB(12)-Holliday junction (HJ) complex. HJ DNA is sandwiched between 2 RuvA tetramers; dsDNA enters through RuvA and exits via RuvB. An RuvB hexamer assembles on each DNA strand where it exits the tetramer. Each RuvB hexamer is contacted by two RuvA subunits (via domain III) on 2 adjacent RuvB subunits; this complex drives branch migration. In the full resolvosome a probable DNA-RuvA(4)-RuvB(12)-RuvC(2) complex forms which resolves the HJ.

Its subcellular location is the cytoplasm. In terms of biological role, the RuvA-RuvB-RuvC complex processes Holliday junction (HJ) DNA during genetic recombination and DNA repair, while the RuvA-RuvB complex plays an important role in the rescue of blocked DNA replication forks via replication fork reversal (RFR). RuvA specifically binds to HJ cruciform DNA, conferring on it an open structure. The RuvB hexamer acts as an ATP-dependent pump, pulling dsDNA into and through the RuvAB complex. HJ branch migration allows RuvC to scan DNA until it finds its consensus sequence, where it cleaves and resolves the cruciform DNA. In Aliivibrio salmonicida (strain LFI1238) (Vibrio salmonicida (strain LFI1238)), this protein is Holliday junction branch migration complex subunit RuvA.